A 158-amino-acid chain; its full sequence is Oocyte-secreted protein 2 (158 aa).

Residues 1–17 form the signal peptide; it reads MALEVLMLLAVLIWTGA.

It belongs to the PLAC1 family. Highly expressed in oocytes.

The protein localises to the secreted. Its subcellular location is the cytoplasm. Involved in oocyte maturation. This is Oocyte-secreted protein 2 (OOSP2) from Homo sapiens (Human).